The following is a 662-amino-acid chain: UvrABC system protein B (662 aa).

A Helicase ATP-binding domain is found at 31–188; the sequence is DNIEGGEKAQ…NDLVDIQFER (158 aa). ATP is bound at residue 44–51; the sequence is GATGTGKT. A Beta-hairpin motif is present at residues 97–120; that stretch reads YYDYYQPEAYVPSSDTYIEKDSSV. One can recognise a Helicase C-terminal domain in the interval 435–601; the sequence is QIDDLLGEIN…TIKKEIRDLI (167 aa). Positions 626–661 constitute a UVR domain; it reads KELVKKLEKQMQEAVEVLDFELAAQIRDMMLEVKAL.

It belongs to the UvrB family. In terms of assembly, forms a heterotetramer with UvrA during the search for lesions. Interacts with UvrC in an incision complex.

It is found in the cytoplasm. Functionally, the UvrABC repair system catalyzes the recognition and processing of DNA lesions. A damage recognition complex composed of 2 UvrA and 2 UvrB subunits scans DNA for abnormalities. Upon binding of the UvrA(2)B(2) complex to a putative damaged site, the DNA wraps around one UvrB monomer. DNA wrap is dependent on ATP binding by UvrB and probably causes local melting of the DNA helix, facilitating insertion of UvrB beta-hairpin between the DNA strands. Then UvrB probes one DNA strand for the presence of a lesion. If a lesion is found the UvrA subunits dissociate and the UvrB-DNA preincision complex is formed. This complex is subsequently bound by UvrC and the second UvrB is released. If no lesion is found, the DNA wraps around the other UvrB subunit that will check the other stand for damage. This is UvrABC system protein B from Streptococcus pneumoniae (strain Taiwan19F-14).